Consider the following 613-residue polypeptide: Cilia- and flagella-associated protein 100 (613 aa).

A disordered region spans residues 36-55 (KSKESKKNKGNVTISDRSSN). Residues 45 to 55 (GNVTISDRSSN) show a composition bias toward polar residues. Coiled coils occupy residues 167 to 198 (ALAM…FLEK), 233 to 260 (VEIR…KHYK), 396 to 435 (FTKL…DKEV), and 504 to 580 (GTVQ…RGRK).

This sequence belongs to the CFAP100 family.

The protein localises to the cytoplasm. Its subcellular location is the cytoskeleton. The protein resides in the cilium axoneme. In terms of biological role, may play a role in ciliary/flagellar motility by regulating the assembly and the activity of axonemal inner dynein arm. This is Cilia- and flagella-associated protein 100 from Mus musculus (Mouse).